We begin with the raw amino-acid sequence, 337 residues long: Fructose-1,6-bisphosphatase class 1 (337 aa).

The Mg(2+) site is built by Glu89, Asp112, Leu114, and Asp115. Substrate-binding positions include 115 to 118, Asn208, Tyr241, and Lys271; that span reads DGSS. Glu277 is a Mg(2+) binding site.

This sequence belongs to the FBPase class 1 family. As to quaternary structure, homotetramer. Mg(2+) serves as cofactor.

It is found in the cytoplasm. The catalysed reaction is beta-D-fructose 1,6-bisphosphate + H2O = beta-D-fructose 6-phosphate + phosphate. It functions in the pathway carbohydrate biosynthesis; gluconeogenesis. The protein is Fructose-1,6-bisphosphatase class 1 of Yersinia pseudotuberculosis serotype O:1b (strain IP 31758).